The following is a 296-amino-acid chain: MSSQAFRTGFVAIVGRPNVGKSTLTNALIGSKISIVSRKAQTTRHRIHGVLTREHEQFVFVDTPGFQTRHGGAMNRMMNRVVTQALADVDVVVHVVEAGKWSEGDAKLLPLLPKAERTILAISKIDALKSRDELFPFVAKIMAQHAYGAVVPVSATKNHQLDQLLEEIAQRLPEGEPMFEEDTLTDRSMRFIAAELVREKIFRLVGDELPYGCTVVIEQWEETDAHARIAACVVVERDSHRPILLGAGGQHMKRIATEARQDIAKLLDKPVHLEVYIKVRKGWSDREGALRDLGYE.

Positions 7–174 (RTGFVAIVGR…LEEIAQRLPE (168 aa)) constitute an Era-type G domain. The tract at residues 15 to 22 (GRPNVGKS) is G1. 15–22 (GRPNVGKS) is a binding site for GTP. A G2 region spans residues 41–45 (QTTRH). A G3 region spans residues 62–65 (DTPG). GTP is bound by residues 62-66 (DTPGF) and 123-126 (SKID). The tract at residues 123–126 (SKID) is G4. A G5 region spans residues 153 to 155 (VSA). Residues 197–281 (VREKIFRLVG…HLEVYIKVRK (85 aa)) enclose the KH type-2 domain.

This sequence belongs to the TRAFAC class TrmE-Era-EngA-EngB-Septin-like GTPase superfamily. Era GTPase family. In terms of assembly, monomer.

Its subcellular location is the cytoplasm. It is found in the cell inner membrane. An essential GTPase that binds both GDP and GTP, with rapid nucleotide exchange. Plays a role in 16S rRNA processing and 30S ribosomal subunit biogenesis and possibly also in cell cycle regulation and energy metabolism. The protein is GTPase Era of Bordetella avium (strain 197N).